Reading from the N-terminus, the 75-residue chain is Kappa-thalatoxin-Cad2a (75 aa).

Positions Met-1–Ala-22 are cleaved as a signal peptide. Residues Arg-23–Arg-40 constitute a propeptide that is removed on maturation. Positions Cys-43–Cys-75 constitute a ShKT domain. 3 disulfide bridges follow: Cys-43–Cys-75, Cys-52–Cys-68, and Cys-57–Cys-72.

The protein belongs to the sea anemone type 1 potassium channel toxin family. Type 1a subfamily.

It localises to the secreted. The protein localises to the nematocyst. Inhibits voltage-gated potassium channels (Kv) with higher potency for Kv1.1/KCNA1 and Kv1.3/KCNA3. The polypeptide is Kappa-thalatoxin-Cad2a (Cryptodendrum adhaesivum (Adhesive sea anemone)).